A 448-amino-acid polypeptide reads, in one-letter code: tRNA-2-methylthio-N(6)-dimethylallyladenosine synthase (448 aa).

In terms of domain architecture, MTTase N-terminal spans 3 to 120; sequence KKLFIKTHGC…LPTMLDSRQG (118 aa). 6 residues coordinate [4Fe-4S] cluster: Cys-12, Cys-49, Cys-83, Cys-158, Cys-162, and Cys-165. In terms of domain architecture, Radical SAM core spans 144 to 376; sequence TSDGATAFVS…QERLNQQTMQ (233 aa). Residues 379 to 444 form the TRAM domain; the sequence is RRMVGNTERI…PNSLRGDLAS (66 aa).

This sequence belongs to the methylthiotransferase family. MiaB subfamily. As to quaternary structure, monomer. [4Fe-4S] cluster is required as a cofactor.

The protein localises to the cytoplasm. It carries out the reaction N(6)-dimethylallyladenosine(37) in tRNA + (sulfur carrier)-SH + AH2 + 2 S-adenosyl-L-methionine = 2-methylsulfanyl-N(6)-dimethylallyladenosine(37) in tRNA + (sulfur carrier)-H + 5'-deoxyadenosine + L-methionine + A + S-adenosyl-L-homocysteine + 2 H(+). In terms of biological role, catalyzes the methylthiolation of N6-(dimethylallyl)adenosine (i(6)A), leading to the formation of 2-methylthio-N6-(dimethylallyl)adenosine (ms(2)i(6)A) at position 37 in tRNAs that read codons beginning with uridine. In Chromohalobacter salexigens (strain ATCC BAA-138 / DSM 3043 / CIP 106854 / NCIMB 13768 / 1H11), this protein is tRNA-2-methylthio-N(6)-dimethylallyladenosine synthase.